The primary structure comprises 163 residues: Large ribosomal subunit protein uL15 (163 aa).

The tract at residues Met-1–Gly-43 is disordered. Residues Arg-21 to Gly-37 are compositionally biased toward gly residues.

It belongs to the universal ribosomal protein uL15 family. As to quaternary structure, part of the 50S ribosomal subunit.

Binds to the 23S rRNA. The sequence is that of Large ribosomal subunit protein uL15 from Afipia carboxidovorans (strain ATCC 49405 / DSM 1227 / KCTC 32145 / OM5) (Oligotropha carboxidovorans).